Here is a 672-residue protein sequence, read N- to C-terminus: DNA ligase (672 aa).

NAD(+) is bound by residues 32 to 36 (DAEYD), 81 to 82 (SL), and E113. K115 serves as the catalytic N6-AMP-lysine intermediate. Residues R136, E173, K290, and K314 each coordinate NAD(+). Residues C408, C411, C426, and C432 each contribute to the Zn(2+) site. The BRCT domain maps to 592-672 (EIDSPFAGKT…EMIRLLGESS (81 aa)).

This sequence belongs to the NAD-dependent DNA ligase family. LigA subfamily. The cofactor is Mg(2+). Requires Mn(2+) as cofactor.

The catalysed reaction is NAD(+) + (deoxyribonucleotide)n-3'-hydroxyl + 5'-phospho-(deoxyribonucleotide)m = (deoxyribonucleotide)n+m + AMP + beta-nicotinamide D-nucleotide.. In terms of biological role, DNA ligase that catalyzes the formation of phosphodiester linkages between 5'-phosphoryl and 3'-hydroxyl groups in double-stranded DNA using NAD as a coenzyme and as the energy source for the reaction. It is essential for DNA replication and repair of damaged DNA. The protein is DNA ligase of Yersinia enterocolitica serotype O:8 / biotype 1B (strain NCTC 13174 / 8081).